Reading from the N-terminus, the 89-residue chain is Co-chaperonin GroES (89 aa).

This sequence belongs to the GroES chaperonin family. Heptamer of 7 subunits arranged in a ring. Interacts with the chaperonin GroEL.

Its subcellular location is the cytoplasm. Functionally, together with the chaperonin GroEL, plays an essential role in assisting protein folding. The GroEL-GroES system forms a nano-cage that allows encapsulation of the non-native substrate proteins and provides a physical environment optimized to promote and accelerate protein folding. GroES binds to the apical surface of the GroEL ring, thereby capping the opening of the GroEL channel. This is Co-chaperonin GroES from Parabacteroides distasonis (strain ATCC 8503 / DSM 20701 / CIP 104284 / JCM 5825 / NCTC 11152).